Consider the following 182-residue polypeptide: ATP synthase subunit delta (182 aa).

Belongs to the ATPase delta chain family. As to quaternary structure, F-type ATPases have 2 components, F(1) - the catalytic core - and F(0) - the membrane proton channel. F(1) has five subunits: alpha(3), beta(3), gamma(1), delta(1), epsilon(1). F(0) has three main subunits: a(1), b(2) and c(10-14). The alpha and beta chains form an alternating ring which encloses part of the gamma chain. F(1) is attached to F(0) by a central stalk formed by the gamma and epsilon chains, while a peripheral stalk is formed by the delta and b chains.

The protein resides in the cell membrane. Its function is as follows. F(1)F(0) ATP synthase produces ATP from ADP in the presence of a proton or sodium gradient. F-type ATPases consist of two structural domains, F(1) containing the extramembraneous catalytic core and F(0) containing the membrane proton channel, linked together by a central stalk and a peripheral stalk. During catalysis, ATP synthesis in the catalytic domain of F(1) is coupled via a rotary mechanism of the central stalk subunits to proton translocation. Functionally, this protein is part of the stalk that links CF(0) to CF(1). It either transmits conformational changes from CF(0) to CF(1) or is implicated in proton conduction. The polypeptide is ATP synthase subunit delta (Lachnoclostridium phytofermentans (strain ATCC 700394 / DSM 18823 / ISDg) (Clostridium phytofermentans)).